The primary structure comprises 123 residues: Large ribosomal subunit protein bL19 (123 aa).

Belongs to the bacterial ribosomal protein bL19 family.

Functionally, this protein is located at the 30S-50S ribosomal subunit interface and may play a role in the structure and function of the aminoacyl-tRNA binding site. This is Large ribosomal subunit protein bL19 (rplS) from Treponema pallidum (strain Nichols).